The chain runs to 127 residues: Large ribosomal subunit protein eL32B (127 aa).

This sequence belongs to the eukaryotic ribosomal protein eL32 family. Component of the large ribosomal subunit (LSU). Mature yeast ribosomes consist of a small (40S) and a large (60S) subunit. The 40S small subunit contains 1 molecule of ribosomal RNA (18S rRNA) and at least 33 different proteins. The large 60S subunit contains 3 rRNA molecules (25S, 5.8S and 5S rRNA) and at least 46 different proteins.

It is found in the cytoplasm. It localises to the nucleus. The protein resides in the nucleolus. Component of the ribosome, a large ribonucleoprotein complex responsible for the synthesis of proteins in the cell. The small ribosomal subunit (SSU) binds messenger RNAs (mRNAs) and translates the encoded message by selecting cognate aminoacyl-transfer RNA (tRNA) molecules. The large subunit (LSU) contains the ribosomal catalytic site termed the peptidyl transferase center (PTC), which catalyzes the formation of peptide bonds, thereby polymerizing the amino acids delivered by tRNAs into a polypeptide chain. The nascent polypeptides leave the ribosome through a tunnel in the LSU and interact with protein factors that function in enzymatic processing, targeting, and the membrane insertion of nascent chains at the exit of the ribosomal tunnel. In Schizosaccharomyces pombe (strain 972 / ATCC 24843) (Fission yeast), this protein is Large ribosomal subunit protein eL32B (rpl3201).